The chain runs to 406 residues: Leu/Ile/Val-binding protein homolog 5 (406 aa).

The signal sequence occupies residues 1–29 (MIGTRLPAWTRVLACGVAGLSLMTISAKA).

The protein belongs to the leucine-binding protein family.

In terms of biological role, component of an amino-acid transport system. The polypeptide is Leu/Ile/Val-binding protein homolog 5 (Brucella suis biovar 1 (strain 1330)).